We begin with the raw amino-acid sequence, 311 residues long: Coproporphyrin III ferrochelatase 1 (311 aa).

Fe-coproporphyrin III contacts are provided by residues Tyr12, Arg29, 45–46, Ser53, and Tyr124; that span reads RY. His182 and Glu263 together coordinate Fe(2+).

The protein belongs to the ferrochelatase family.

It localises to the cytoplasm. It carries out the reaction Fe-coproporphyrin III + 2 H(+) = coproporphyrin III + Fe(2+). Its pathway is porphyrin-containing compound metabolism; protoheme biosynthesis. In terms of biological role, involved in coproporphyrin-dependent heme b biosynthesis. Catalyzes the insertion of ferrous iron into coproporphyrin III to form Fe-coproporphyrin III. This is Coproporphyrin III ferrochelatase 1 from Bacillus cereus (strain ATCC 14579 / DSM 31 / CCUG 7414 / JCM 2152 / NBRC 15305 / NCIMB 9373 / NCTC 2599 / NRRL B-3711).